A 441-amino-acid chain; its full sequence is Zinc finger and BTB domain-containing protein 8A (441 aa).

The 69-residue stretch at 24-92 (CDCSILVEGK…VYSGKLSLTG (69 aa)) folds into the BTB domain. 2 stretches are compositionally biased toward polar residues: residues 143-170 (NGVE…SPEQ) and 178-196 (KSWN…TQQP). The interval 143–251 (NGVERSSFYS…QSEEQAQIDA (109 aa)) is disordered. 2 positions are modified to phosphoserine: serine 161 and serine 167. Glycyl lysine isopeptide (Lys-Gly) (interchain with G-Cter in SUMO2) cross-links involve residues lysine 178, lysine 182, lysine 191, and lysine 199. The segment covering 198–208 (AKHEPRKESIK) has biased composition (basic and acidic residues). Residues 234–243 (SDSSSHVSQS) show a composition bias toward low complexity. C2H2-type zinc fingers lie at residues 282–304 (FKCP…LRCH) and 310–333 (YPCQ…RTIH). Residue lysine 437 forms a Glycyl lysine isopeptide (Lys-Gly) (interchain with G-Cter in SUMO2) linkage.

The protein resides in the nucleus. Its function is as follows. May be involved in transcriptional regulation. The polypeptide is Zinc finger and BTB domain-containing protein 8A (ZBTB8A) (Homo sapiens (Human)).